A 41-amino-acid chain; its full sequence is Conotoxin Ac4.2 (41 aa).

Residues 1 to 11 constitute a propeptide that is removed on maturation; that stretch reads FDGRNAAVNER. Pro13 carries the 4-hydroxyproline modification. Residues Thr18 and Thr20 are each glycosylated (O-linked (HexNAc...) threonine). 4-hydroxyproline is present on residues Pro29 and Pro33. Cys40 bears the Cysteine amide mark.

The protein belongs to the conotoxin A superfamily. Contains 3 disulfide bonds. As to expression, expressed by the venom duct.

The protein resides in the secreted. In terms of biological role, probable neurotoxin with ion channel inhibitor activity. The polypeptide is Conotoxin Ac4.2 (Conus achatinus (Little frog cone)).